A 270-amino-acid chain; its full sequence is Phosphatidylglycerol--prolipoprotein diacylglyceryl transferase (270 aa).

7 helical membrane-spanning segments follow: residues 10 to 30, 56 to 76, 92 to 112, 120 to 140, 175 to 195, 202 to 222, and 237 to 257; these read VAVA…LVGI, LIFW…VLFY, WKGG…AWWF, FFQL…AGRI, SQLY…NLYA, MAVS…VEFV, and VTMG…LIWL. Arginine 139 contacts a 1,2-diacyl-sn-glycero-3-phospho-(1'-sn-glycerol).

It belongs to the Lgt family.

It localises to the cell inner membrane. The enzyme catalyses L-cysteinyl-[prolipoprotein] + a 1,2-diacyl-sn-glycero-3-phospho-(1'-sn-glycerol) = an S-1,2-diacyl-sn-glyceryl-L-cysteinyl-[prolipoprotein] + sn-glycerol 1-phosphate + H(+). It participates in protein modification; lipoprotein biosynthesis (diacylglyceryl transfer). Functionally, catalyzes the transfer of the diacylglyceryl group from phosphatidylglycerol to the sulfhydryl group of the N-terminal cysteine of a prolipoprotein, the first step in the formation of mature lipoproteins. The polypeptide is Phosphatidylglycerol--prolipoprotein diacylglyceryl transferase (Pseudomonas savastanoi pv. phaseolicola (strain 1448A / Race 6) (Pseudomonas syringae pv. phaseolicola (strain 1448A / Race 6))).